The chain runs to 324 residues: MTNPVSTIDMTVTQITRVAKDINSYELRPEPGVILPEFTAGAHIGVSLPNGIQRSYSLVNPQGERDRYVITVNLDRNSRGGSRYLHEQLRVGQRLSIVPPANNFALVETAPHSVLFAGGIGITPIWSMIQRLRELGSTWELHYACRGKDFVAYRQELEQAAAEAGARFHLHLDEEADGKFLDLAGPVAQAGQDSIFYCCGPEAMLQAYKAATADLPSERVRFEHFGAALTGEPADDVFTVVLARRSGQEFTVEPGMTILETLLQNGISRNYSCTQGVCGTCETKVLEGEPDHRDWVLSDEKKASNSTMLICCSLSKSPRLVLDI.

Residues 5 to 107 form the FAD-binding FR-type domain; sequence VSTIDMTVTQ…VPPANNFALV (103 aa). The 2Fe-2S ferredoxin-type domain maps to 238 to 324; that stretch reads FTVVLARRSG…SKSPRLVLDI (87 aa). 4 residues coordinate [2Fe-2S] cluster: Cys273, Cys278, Cys281, and Cys311.

The protein belongs to the PDR/VanB family. Homotrimer. It depends on FMN as a cofactor. The cofactor is [2Fe-2S] cluster.

The enzyme catalyses 2,3,5,6-tetrachlorohydroquinone + NAD(+) + H(+) = 2,3,5,6-tetrachloro-1,4-benzoquinone + NADH. Its pathway is xenobiotic degradation; pentachlorophenol degradation. With respect to regulation, in vitro, activated by tetrachlorohydroquinone (TCHQ) at low concentrations and inhibited at high concentrations (above 200 uM). However, PcpD would only be stimulated by tetrachlorohydroquinone (TCHQ) under in vivo conditions due to the toxicity of tetrachlorohydroquinone (TCHQ). Competitively inhibited by pentachlorophenol (PCP) in a concentration-dependent manner. PcpD is regulated by tetrachlorohydroquinone (TCHQ) and pentachlorophenol (PCP) using a mechanism, which maintains tetrachlorobenzoquinone at a level that would neither significantly decrease the biodegradation of pentachlorophenol (PCP) nor cause cytotoxicity in cells. Functionally, involved in the degradation of the xenobiocide pentachlorophenol (PCP). Catalyzes the reduction of tetrachlorobenzoquinone (TCBQ) to yield tetrachlorohydroquinone (TCHQ). Also able to reduce 2,6-dichloroindophenol (DCIP). This is Tetrachlorobenzoquinone reductase from Sphingobium chlorophenolicum.